We begin with the raw amino-acid sequence, 3434 residues long: Genome polyprotein (3434 aa).

Residues 1 to 106 (MSKKPGGPGR…NRGTKKKRGN (106 aa)) are Cytoplasmic-facing. The segment at 2–15 (SKKPGGPGRNRAIN) is interaction with host EXOC1. The interval 37–72 (LLDGRGPVRFVLALMTFFKFTALAPTKALLGRWKRI) is hydrophobic; homodimerization of capsid protein C. Residues 105–126 (GNNGPGLVMIITLMTVVSMVSS) constitute a propeptide, ER anchor for the capsid protein C, removed in mature form by serine protease NS3. A helical transmembrane segment spans residues 107–126 (NGPGLVMIITLMTVVSMVSS). Residues 127 to 248 (LKLSNFQGKV…DSTKASRYLM (122 aa)) are Extracellular-facing. Asparagine 141 is a glycosylation site (N-linked (GlcNAc...) asparagine; by host). Residues 249–273 (KTENWIIRNPGYAFVAVLLGWMLGS) form a helical membrane-spanning segment. Topologically, residues 274 to 278 (NNGQR) are cytoplasmic. The chain crosses the membrane as a helical span at residues 279 to 293 (VVFVVLLLLVAPAYS). Topologically, residues 294 to 745 (FNCLGMSNRD…QVFGGAFRTL (452 aa)) are extracellular. 8 cysteine pairs are disulfide-bonded: cysteine 296-cysteine 323, cysteine 353-cysteine 409, cysteine 353-cysteine 414, cysteine 367-cysteine 398, cysteine 385-cysteine 409, cysteine 385-cysteine 414, cysteine 483-cysteine 580, and cysteine 597-cysteine 628. Residues 391 to 404 (DRGWGNGCGLFGKG) form a fusion peptide region. A helical transmembrane segment spans residues 746–766 (FGGMSWITQGLMGALLLWMGV). Residues 767–772 (NARDRS) lie on the Cytoplasmic side of the membrane. The chain crosses the membrane as a helical span at residues 773 to 793 (IALVMLATGGVLLFLATNVHA). At 794-1218 (DSGCAIDVGR…AFAEANSGGD (425 aa)) the chain is on the extracellular side. Intrachain disulfides connect cysteine 797-cysteine 808 and cysteine 848-cysteine 936. Asparagine 923, asparagine 968, and asparagine 1000 each carry an N-linked (GlcNAc...) asparagine; by host glycan. 6 disulfide bridges follow: cysteine 972/cysteine 1016, cysteine 1073/cysteine 1122, cysteine 1084/cysteine 1105, cysteine 1084/cysteine 1106, cysteine 1105/cysteine 1109, and cysteine 1106/cysteine 1109. A helical transmembrane segment spans residues 1219–1239 (VVHLALIAAFKIQPGFLAMTF). At 1240–1249 (LRGKWTNQEN) the chain is on the cytoplasmic side. Residues 1250–1270 (ILLALGAAFFQMAATDLNFSL) form a helical membrane-spanning segment. Residues 1271–1286 (PGILNATATAWMLLRA) lie on the Lumenal side of the membrane. The chain crosses the membrane as a helical span at residues 1287-1307 (ATQPSTSAIVMPLLCLLAPGM). Residue arginine 1308 is a topological domain, cytoplasmic. Residues 1309–1329 (LLYLDTYRITLIIIGICSLIG) form a helical membrane-spanning segment. Residues 1330 to 1340 (ERRRAAAKKKG) lie on the Lumenal side of the membrane. The chain crosses the membrane as a helical span at residues 1341–1361 (AVLLGLALTSTGQFSASVMAA). At 1362-1373 (GLMACNPNKKRG) the chain is on the cytoplasmic side. Residues 1374 to 1394 (WPATEVLTAVGLMFAIVGGLA) form a helical membrane-spanning segment. Over 1395–1397 (ELD) the chain is Lumenal. A helical transmembrane segment spans residues 1398-1418 (VDSMSIPFVLAGLMAVSYTIS). Topologically, residues 1419–1475 (GKSTDLWLERAADITWETDAAITGTSQRLDVKLDDDGDFHLINDPGVPWKIWVIRMT) are cytoplasmic. Residues 1426–1465 (LERAADITWETDAAITGTSQRLDVKLDDDGDFHLINDPGV) form an interacts with and activates NS3 protease region. Residues 1476–1496 (ALGFAAWTPWAIIPAGIGYWL) constitute an intramembrane region (helical). At 1497–2173 (TVKYAKRGGV…MALEELPDAL (677 aa)) the chain is on the cytoplasmic side. The Peptidase S7 domain occupies 1504–1681 (GGVFWDTPAP…EREEEPVPEA (178 aa)). Catalysis depends on charge relay system; for serine protease NS3 activity residues histidine 1554, aspartate 1578, and serine 1638. The Helicase ATP-binding domain maps to 1684-1840 (ADMLRKKQLT…DTNAPVTDIQ (157 aa)). Residues 1688 to 1691 (RKKQ) are important for RNA-binding. 1697-1704 (LHPGAGKT) contacts ATP. The DEAH box signature appears at 1788–1791 (DEAH). The 166-residue stretch at 1851 to 2016 (GFEWITEYTG…GLVAQMYGPE (166 aa)) folds into the Helicase C-terminal domain. Lysine 1892 carries the N6-acetyllysine; by host modification. Residues 1956-1980 (ASAAQRRGRVGRNPSQIGDEYHYGG) are disordered. The interval 2167 to 2171 (EELPD) is regulates the ATPase activity of NS3 helicase. The helical transmembrane segment at 2174–2194 (ETITLIVALAVMTAGVFLLLV) threads the bilayer. Over 2195–2198 (QRRG) the chain is Lumenal. Positions 2199-2219 (IGKLGLGGMVLGLATFFLWMA) form an intramembrane region, helical. A topological domain (lumenal) is located at residue aspartate 2220. A helical transmembrane segment spans residues 2221–2241 (VSGTKIAGTLLLALLMMIVLI). Residues 2242-2256 (PEPEKQRSQTDNQLA) lie on the Cytoplasmic side of the membrane. The helical transmembrane segment at 2257 to 2277 (VFLICVLLVVGVVAANEYGML) threads the bilayer. The Lumenal segment spans residues 2278–2313 (ERTKSDLGKIFSSTRQPQSALPLPSMNALALDLRPA). An intramembrane region (helical) is located at residues 2314 to 2334 (TAWALYGGSTVVLTPLIKHLV). Residues 2335-2368 (TSEYITTSLASISAQAGSLFNLPRGLPFTELDFT) lie on the Lumenal side of the membrane. The chain crosses the membrane as a helical span at residues 2369-2389 (VVLVFLGCWGQVSLTTLITAA). Residues 2390–2446 (ALATLHYGYMLPGWQAEALRAAQRRTAAGIMKNAVVDGLVATDVPELERTTPLMQKK) lie on the Cytoplasmic side of the membrane. The helical transmembrane segment at 2447-2467 (VGQILLIGVSAAALLVNPCVT) threads the bilayer. The Lumenal segment spans residues 2468–2471 (TVRE). A helical transmembrane segment spans residues 2472 to 2492 (AGILISAALLTLWDNGAIAVW). Topologically, residues 2493–3434 (NSTTATGLCH…EVNVQEDRVL (942 aa)) are cytoplasmic. Residues 2530–2795 (GRPGGRTLGE…DVNLGSGTRA (266 aa)) form the mRNA cap 0-1 NS5-type MT domain. Residues 2567–2587 (SAARKARRDGNKTGGHPVSRG) are disordered. S-adenosyl-L-methionine is bound at residue serine 2585. At serine 2585 the chain carries Phosphoserine. The For 2'-O-MTase activity role is filled by lysine 2590. The S-adenosyl-L-methionine site is built by glycine 2615, tryptophan 2616, threonine 2633, lysine 2634, aspartate 2660, and valine 2661. Aspartate 2675 functions as the For 2'-O-MTase activity in the catalytic mechanism. Isoleucine 2676 contributes to the S-adenosyl-L-methionine binding site. Catalysis depends on for 2'-O-MTase activity residues lysine 2711 and glutamate 2747. Tyrosine 2749 contacts S-adenosyl-L-methionine. Zn(2+) is bound by residues glutamate 2969, histidine 2973, cysteine 2978, and cysteine 2981. A RdRp catalytic domain is found at 3059-3211 (GKMYADDTAG…KPLDDRFANA (153 aa)). Histidine 3246, cysteine 3262, and cysteine 3381 together coordinate Zn(2+).

The protein in the N-terminal section; belongs to the class I-like SAM-binding methyltransferase superfamily. mRNA cap 0-1 NS5-type methyltransferase family. As to quaternary structure, homodimer. Interacts (via N-terminus) with host EXOC1 (via C-terminus); this interaction results in EXOC1 degradation through the proteasome degradation pathway. Forms heterodimers with envelope protein E in the endoplasmic reticulum and Golgi. In terms of assembly, homodimer; in the endoplasmic reticulum and Golgi. Interacts with protein prM. Interacts with non-structural protein 1. As to quaternary structure, homodimer; Homohexamer when secreted. Interacts with envelope protein E. NS1 interacts with NS4B. Interacts with host complement protein CFH; this interaction leads to the degradation of C3. Interacts (via N-terminus) with serine protease NS3. In terms of assembly, forms a heterodimer with serine protease NS3. May form homooligomers. As to quaternary structure, forms a heterodimer with NS2B. Interacts with non-structural protein 2A (via N-terminus). Interacts with NS4B. Interacts with unphosphorylated RNA-directed RNA polymerase NS5; this interaction stimulates RNA-directed RNA polymerase NS5 guanylyltransferase activity. Interacts with serine protease NS3. In terms of assembly, homodimer. Interacts with host STAT2; this interaction inhibits the phosphorylation of the latter, and, when all viral proteins are present (polyprotein), targets STAT2 for degradation. Interacts with serine protease NS3. In terms of processing, specific enzymatic cleavages in vivo yield mature proteins. Cleavages in the lumen of endoplasmic reticulum are performed by host signal peptidase, whereas cleavages in the cytoplasmic side are performed by serine protease NS3. Signal cleavage at the 2K-4B site requires a prior NS3 protease-mediated cleavage at the 4A-2K site. Post-translationally, cleaved in post-Golgi vesicles by a host furin, releasing the mature small envelope protein M, and peptide pr. This cleavage is incomplete as up to 30% of viral particles still carry uncleaved prM. N-glycosylated. In terms of processing, N-glycosylated. The excreted form is glycosylated and this is required for efficient secretion of the protein from infected cells. Post-translationally, acetylated by host KAT5. Acetylation modulates NS3 RNA-binding and unwinding activities and plays an important positive role for viral replication. Phosphorylated on serines residues. This phosphorylation may trigger NS5 nuclear localization.

It localises to the virion. Its subcellular location is the host nucleus. It is found in the host cytoplasm. The protein resides in the host perinuclear region. The protein localises to the secreted. It localises to the virion membrane. Its subcellular location is the host endoplasmic reticulum membrane. The enzyme catalyses Selective hydrolysis of -Xaa-Xaa-|-Yaa- bonds in which each of the Xaa can be either Arg or Lys and Yaa can be either Ser or Ala.. It catalyses the reaction RNA(n) + a ribonucleoside 5'-triphosphate = RNA(n+1) + diphosphate. It carries out the reaction a ribonucleoside 5'-triphosphate + H2O = a ribonucleoside 5'-diphosphate + phosphate + H(+). The catalysed reaction is ATP + H2O = ADP + phosphate + H(+). The enzyme catalyses a 5'-end (5'-triphosphoguanosine)-ribonucleoside in mRNA + S-adenosyl-L-methionine = a 5'-end (N(7)-methyl 5'-triphosphoguanosine)-ribonucleoside in mRNA + S-adenosyl-L-homocysteine. It catalyses the reaction a 5'-end (N(7)-methyl 5'-triphosphoguanosine)-ribonucleoside in mRNA + S-adenosyl-L-methionine = a 5'-end (N(7)-methyl 5'-triphosphoguanosine)-(2'-O-methyl-ribonucleoside) in mRNA + S-adenosyl-L-homocysteine + H(+). Plays a role in virus budding by binding to the cell membrane and gathering the viral RNA into a nucleocapsid that forms the core of a mature virus particle. During virus entry, may induce genome penetration into the host cytoplasm after hemifusion induced by the surface proteins. Can migrate to the cell nucleus where it modulates host functions. Overcomes the anti-viral effects of host EXOC1 by sequestering and degrading the latter through the proteasome degradation pathway. Functionally, inhibits RNA silencing by interfering with host Dicer. In terms of biological role, prevents premature fusion activity of envelope proteins in trans-Golgi by binding to envelope protein E at pH6.0. After virion release in extracellular space, gets dissociated from E dimers. Its function is as follows. Acts as a chaperone for envelope protein E during intracellular virion assembly by masking and inactivating envelope protein E fusion peptide. prM is the only viral peptide matured by host furin in the trans-Golgi network probably to avoid catastrophic activation of the viral fusion activity in acidic Golgi compartment prior to virion release. prM-E cleavage is inefficient, and many virions are only partially matured. These uncleaved prM would play a role in immune evasion. May play a role in virus budding. Exerts cytotoxic effects by activating a mitochondrial apoptotic pathway through M ectodomain. May display a viroporin activity. Functionally, binds to host cell surface receptor and mediates fusion between viral and cellular membranes. Envelope protein is synthesized in the endoplasmic reticulum in the form of heterodimer with protein prM. They play a role in virion budding in the ER, and the newly formed immature particle is covered with 60 spikes composed of heterodimer between precursor prM and envelope protein E. The virion is transported to the Golgi apparatus where the low pH causes dissociation of PrM-E heterodimers and formation of E homodimers. prM-E cleavage is inefficient, and many virions are only partially matured. These uncleaved prM would play a role in immune evasion. In terms of biological role, involved in immune evasion, pathogenesis and viral replication. Once cleaved off the polyprotein, is targeted to three destinations: the viral replication cycle, the plasma membrane and the extracellular compartment. Essential for viral replication. Required for formation of the replication complex and recruitment of other non-structural proteins to the ER-derived membrane structures. Excreted as a hexameric lipoparticle that plays a role against host immune response. Antagonizing the complement function. Binds to the host macrophages and dendritic cells. Inhibits signal transduction originating from Toll-like receptor 3 (TLR3). Its function is as follows. Component of the viral RNA replication complex that functions in virion assembly and antagonizes the host alpha/beta interferon antiviral response. Required cofactor for the serine protease function of NS3. May have membrane-destabilizing activity and form viroporins. Functionally, displays three enzymatic activities: serine protease, NTPase and RNA helicase. NS3 serine protease, in association with NS2B, performs its autocleavage and cleaves the polyprotein at dibasic sites in the cytoplasm: C-prM, NS2A-NS2B, NS2B-NS3, NS3-NS4A, NS4A-2K and NS4B-NS5. NS3 RNA helicase binds RNA and unwinds dsRNA in the 3' to 5' direction. In terms of biological role, regulates the ATPase activity of the NS3 helicase activity. NS4A allows NS3 helicase to conserve energy during unwinding. Its function is as follows. Functions as a signal peptide for NS4B and is required for the interferon antagonism activity of the latter. Induces the formation of ER-derived membrane vesicles where the viral replication takes place. Inhibits interferon (IFN)-induced host STAT1 phosphorylation and nuclear translocation, thereby preventing the establishment of cellular antiviral state by blocking the IFN-alpha/beta pathway. Inhibits STAT2 translocation in the nucleus after IFN-alpha treatment. Functionally, replicates the viral (+) and (-) RNA genome, and performs the capping of genomes in the cytoplasm. NS5 methylates viral RNA cap at guanine N-7 and ribose 2'-O positions. Besides its role in RNA genome replication, also prevents the establishment of cellular antiviral state by blocking the interferon-alpha/beta (IFN-alpha/beta) signaling pathway. Inhibits host TYK2 and STAT2 phosphorylation, thereby preventing activation of JAK-STAT signaling pathway. This is Genome polyprotein from Usutu virus (USUV).